Reading from the N-terminus, the 444-residue chain is Amino-acid acetyltransferase (444 aa).

Positions 295–434 (EKVRRANIND…QALYNYQRRS (140 aa)) constitute an N-acetyltransferase domain.

It belongs to the acetyltransferase family. ArgA subfamily. In terms of assembly, homohexamer.

The protein resides in the cytoplasm. It carries out the reaction L-glutamate + acetyl-CoA = N-acetyl-L-glutamate + CoA + H(+). It functions in the pathway amino-acid biosynthesis; L-arginine biosynthesis; N(2)-acetyl-L-ornithine from L-glutamate: step 1/4. This is Amino-acid acetyltransferase from Proteus mirabilis (strain HI4320).